The following is a 342-amino-acid chain: Polygalacturonase inhibitor 3 (342 aa).

Positions 1–29 (MTQFNIPVTMSSSLSIILVILVSLRTALS) are cleaved as a signal peptide. Disulfide bonds link cysteine 32–cysteine 62 and cysteine 63–cysteine 72. The N-linked (GlcNAc...) asparagine glycan is linked to asparagine 64. 10 LRR repeats span residues 82–107 (NNLD…LPYL), 108–132 (NFLY…LTQL), 133–156 (HYLY…IKTL), 157–180 (VTLD…LPNL), 181–205 (VGIT…SKLF), 206–228 (TSMT…NLNL), 229–252 (AFVD…DKNT), 253–275 (QKIH…SKNL), 276–299 (NGLD…LKFL), and 300–319 (HSLN…GGNL). An N-linked (GlcNAc...) asparagine glycan is attached at asparagine 141. N-linked (GlcNAc...) asparagine glycosylation occurs at asparagine 303. Disulfide bonds link cysteine 310–cysteine 332 and cysteine 334–cysteine 341.

It belongs to the polygalacturonase-inhibiting protein family. As to expression, found in suspension-cultured cells and to a lesser extent in hypocotyls, leaves and flowers.

The protein resides in the secreted. The protein localises to the cell wall. It is found in the membrane. Functionally, inhibitor of fungal polygalacturonase. It is an important factor for plant resistance to phytopathogenic fungi. This Phaseolus vulgaris (Kidney bean) protein is Polygalacturonase inhibitor 3 (PGIP3).